The primary structure comprises 175 residues: ATP synthase subunit b (175 aa).

Residues 14-34 (LSPNPGLIFWTTVSFVIVLLI) traverse the membrane as a helical segment.

This sequence belongs to the ATPase B chain family. As to quaternary structure, F-type ATPases have 2 components, F(1) - the catalytic core - and F(0) - the membrane proton channel. F(1) has five subunits: alpha(3), beta(3), gamma(1), delta(1), epsilon(1). F(0) has four main subunits: a(1), b(2) and c(10-14). The alpha and beta chains form an alternating ring which encloses part of the gamma chain. F(1) is attached to F(0) by a central stalk formed by the gamma and epsilon chains, while a peripheral stalk is formed by the delta and b chains.

Its subcellular location is the cell inner membrane. In terms of biological role, f(1)F(0) ATP synthase produces ATP from ADP in the presence of a proton or sodium gradient. F-type ATPases consist of two structural domains, F(1) containing the extramembraneous catalytic core and F(0) containing the membrane proton channel, linked together by a central stalk and a peripheral stalk. During catalysis, ATP synthesis in the catalytic domain of F(1) is coupled via a rotary mechanism of the central stalk subunits to proton translocation. Component of the F(0) channel, it forms part of the peripheral stalk, linking F(1) to F(0). This Chlorobium phaeobacteroides (strain DSM 266 / SMG 266 / 2430) protein is ATP synthase subunit b.